Consider the following 684-residue polypeptide: Divalent metal transporter 1 (684 aa).

The Cytoplasmic portion of the chain corresponds to 1–228; the sequence is MEKDFTERST…YRNKLSLYNK (228 aa). The segment at 153–195 is disordered; that stretch reads NKRNNNNNNNNNNNNNNNNNNNNNNNNNNNNNNNNSNNVDNRK. The segment covering 156–191 has biased composition (low complexity); it reads NNNNNNNNNNNNNNNNNNNNNNNNNNNNNNNNSNNV. Residues 229-247 form a helical membrane-spanning segment; it reads LRMCFNYFGPGWIVAIAYL. Residues 248-275 are Vacuolar-facing; the sequence is DPGNLCSNLNVGLIRSPDPTLEKDYSGY. Residues 276–299 form a helical membrane-spanning segment; it reads YLLWIMVYGHMLGFIFQVLSMRLG. The Cytoplasmic segment spans residues 300-319; the sequence is HVTGLDLASLCSKEFDRTTS. A helical transmembrane segment spans residues 320 to 345; it reads TIIYVLVQIAIWGAHIQAIIGTFIAL. At 346 to 350 the chain is on the vacuolar side; it reads NLIFG. A helical membrane pass occupies residues 351 to 370; that stretch reads ISVKVAIFYTLFEAIIYSFL. Residues 371-381 lie on the Cytoplasmic side of the membrane; sequence ENKSLGLLENV. The chain crosses the membrane as a helical span at residues 382 to 404; the sequence is LSFLVGILAVSFFVNVFMTPINF. Over 405–423 the chain is Vacuolar; sequence KELAISILYPRIPKGKEID. The chain crosses the membrane as a helical span at residues 424 to 445; it reads ALALLGSIISAHIFYLHTNLTA. The Cytoplasmic portion of the chain corresponds to 446–465; that stretch reads KKKSVICNDLSLRRYNTLGT. The helical transmembrane segment at 466–487 threads the bilayer; it reads IESGGSLFLSCLTNCIIVLTFA. The Vacuolar portion of the chain corresponds to 488 to 515; it reads EVNLKSFERRDQYNLFTAYEVMRKSFGK. The helical transmembrane segment at 516 to 534 threads the bilayer; it reads ISMYIWSFGLLSSGNNSSF. The Cytoplasmic portion of the chain corresponds to 535 to 554; sequence MCEYASKSVVEGFLNKKINT. The helical transmembrane segment at 555–573 threads the bilayer; sequence FVRVFTFRLMLFSLLYMFL. Topologically, residues 574-584 are vacuolar; sequence TLNKYTLDQLT. A helical transmembrane segment spans residues 585 to 603; the sequence is NFINVIQVLLLPMATIPLY. The Cytoplasmic portion of the chain corresponds to 604–622; sequence RFSIHENVLGEFRLKKFPK. Residues 623–645 form a helical membrane-spanning segment; that stretch reads FAVFLIIIAIIISNVLLTFLDFV. Topologically, residues 646–650 are vacuolar; it reads HKETS. A helical transmembrane segment spans residues 651 to 673; that stretch reads LITIFFLVIFSFLYFGFIIYFFN. At 674–684 the chain is on the cytoplasmic side; sequence IPIKKNYIQRN.

This sequence belongs to the NRAMP (TC 2.A.55) family.

Its subcellular location is the vacuole membrane. The enzyme catalyses Fe(2+)(in) = Fe(2+)(out). In terms of biological role, iron transporter. Required for parasite development during the blood stages. Required for apicoplast biogenesis. Required for mitochondrial polarization. The chain is Divalent metal transporter 1 from Plasmodium falciparum (isolate 3D7).